The following is a 119-amino-acid chain: Ribonuclease P protein component (119 aa).

The protein belongs to the RnpA family. As to quaternary structure, consists of a catalytic RNA component (M1 or rnpB) and a protein subunit.

The catalysed reaction is Endonucleolytic cleavage of RNA, removing 5'-extranucleotides from tRNA precursor.. RNaseP catalyzes the removal of the 5'-leader sequence from pre-tRNA to produce the mature 5'-terminus. It can also cleave other RNA substrates such as 4.5S RNA. The protein component plays an auxiliary but essential role in vivo by binding to the 5'-leader sequence and broadening the substrate specificity of the ribozyme. The sequence is that of Ribonuclease P protein component from Nitrosomonas europaea (strain ATCC 19718 / CIP 103999 / KCTC 2705 / NBRC 14298).